A 511-amino-acid chain; its full sequence is uncharacterized protein (511 aa).

Positions 2 to 254 (LMDYEKERTE…NFQEKAPIHE (253 aa)) constitute a CoA carboxyltransferase N-terminal domain. Residues 2–506 (LMDYEKERTE…KEMTFTNRKH (505 aa)) are carboxyltransferase. The region spanning 260 to 506 (HFETPLADVI…KEMTFTNRKH (247 aa)) is the CoA carboxyltransferase C-terminal domain.

Belongs to the AccD/PCCB family.

This is an uncharacterized protein from Bacillus subtilis (strain 168).